We begin with the raw amino-acid sequence, 763 residues long: Protein translocase subunit SecA 2 (763 aa).

Residues Gln83, 101–105, and Asp490 contribute to the ATP site; that span reads GEGKT.

Belongs to the SecA family. As to quaternary structure, monomer and homodimer. Part of the essential Sec protein translocation apparatus which comprises SecA, SecYEG and auxiliary proteins SecDF. Other proteins may also be involved.

Its subcellular location is the cell membrane. It is found in the cytoplasm. The enzyme catalyses ATP + H2O + cellular proteinSide 1 = ADP + phosphate + cellular proteinSide 2.. Functionally, part of the Sec protein translocase complex. Interacts with the SecYEG preprotein conducting channel. Has a central role in coupling the hydrolysis of ATP to the transfer of proteins into and across the cell membrane, serving as an ATP-driven molecular motor driving the stepwise translocation of polypeptide chains across the membrane. This chain is Protein translocase subunit SecA 2, found in Corynebacterium glutamicum (strain R).